A 194-amino-acid polypeptide reads, in one-letter code: dTTP/UTP pyrophosphatase (194 aa).

Aspartate 69 acts as the Proton acceptor in catalysis.

This sequence belongs to the Maf family. YhdE subfamily. Requires a divalent metal cation as cofactor.

The protein resides in the cytoplasm. It catalyses the reaction dTTP + H2O = dTMP + diphosphate + H(+). The enzyme catalyses UTP + H2O = UMP + diphosphate + H(+). Functionally, nucleoside triphosphate pyrophosphatase that hydrolyzes dTTP and UTP. May have a dual role in cell division arrest and in preventing the incorporation of modified nucleotides into cellular nucleic acids. In Moorella thermoacetica (strain ATCC 39073 / JCM 9320), this protein is dTTP/UTP pyrophosphatase.